The sequence spans 173 residues: UPF0316 protein Amet_0954 (173 aa).

3 helical membrane-spanning segments follow: residues 3 to 23, 38 to 58, and 61 to 81; these read LVLGYLFIFVARVTDVGMGTV, AIGFVESIIYILAIGKVLEAL, and PVNILVYATGFAAGNYVGIYI.

Belongs to the UPF0316 family.

The protein localises to the cell membrane. This Alkaliphilus metalliredigens (strain QYMF) protein is UPF0316 protein Amet_0954.